A 480-amino-acid chain; its full sequence is Glutamate--tRNA ligase (480 aa).

The 'HIGH' region signature appears at 21–31 (PSPTGYLHVGG). The Zn(2+) site is built by cysteine 110, cysteine 112, cysteine 137, and histidine 139. A 'KMSKS' region motif is present at residues 248-252 (KLSKR). An ATP-binding site is contributed by lysine 251.

This sequence belongs to the class-I aminoacyl-tRNA synthetase family. Glutamate--tRNA ligase type 1 subfamily. As to quaternary structure, monomer. It depends on Zn(2+) as a cofactor.

The protein resides in the cytoplasm. The catalysed reaction is tRNA(Glu) + L-glutamate + ATP = L-glutamyl-tRNA(Glu) + AMP + diphosphate. Functionally, catalyzes the attachment of glutamate to tRNA(Glu) in a two-step reaction: glutamate is first activated by ATP to form Glu-AMP and then transferred to the acceptor end of tRNA(Glu). This chain is Glutamate--tRNA ligase, found in Mannheimia succiniciproducens (strain KCTC 0769BP / MBEL55E).